A 1483-amino-acid chain; its full sequence is Chromosome partition protein MukB (1483 aa).

34-41 (GGNGAGKS) is a binding site for ATP. 7 coiled-coil regions span residues 326–418 (LEAD…QYNQ), 444–480 (LETF…QAYQ), 509–601 (RHLA…MQRA), 780–804 (RAAC…FATL), 837–923 (EIRQ…AKLE), 977–1115 (EMLS…TAKA), and 1209–1265 (VEAI…LQNV). A flexible hinge region spans residues 666 to 783 (PGGSEDQRLN…EVPLFGRAAC (118 aa)).

Belongs to the SMC family. MukB subfamily. In terms of assembly, homodimerization via its hinge domain. Binds to DNA via its C-terminal region. Interacts, and probably forms a ternary complex, with MukE and MukF via its C-terminal region. The complex formation is stimulated by calcium or magnesium. Interacts with tubulin-related protein FtsZ.

Its subcellular location is the cytoplasm. It is found in the nucleoid. Functionally, plays a central role in chromosome condensation, segregation and cell cycle progression. Functions as a homodimer, which is essential for chromosome partition. Involved in negative DNA supercoiling in vivo, and by this means organize and compact chromosomes. May achieve or facilitate chromosome segregation by condensation DNA from both sides of a centrally located replisome during cell division. The chain is Chromosome partition protein MukB from Shigella dysenteriae serotype 1 (strain Sd197).